Consider the following 81-residue polypeptide: ATP synthase subunit c, chloroplastic (81 aa).

Transmembrane regions (helical) follow at residues 3 to 23 (PLIS…ASIG) and 53 to 73 (LLLS…VALA).

This sequence belongs to the ATPase C chain family. In terms of assembly, F-type ATPases have 2 components, F(1) - the catalytic core - and F(0) - the membrane proton channel. F(1) has five subunits: alpha(3), beta(3), gamma(1), delta(1), epsilon(1). F(0) has four main subunits: a(1), b(1), b'(1) and c(10-14). The alpha and beta chains form an alternating ring which encloses part of the gamma chain. F(1) is attached to F(0) by a central stalk formed by the gamma and epsilon chains, while a peripheral stalk is formed by the delta, b and b' chains.

The protein resides in the plastid. It is found in the chloroplast thylakoid membrane. F(1)F(0) ATP synthase produces ATP from ADP in the presence of a proton or sodium gradient. F-type ATPases consist of two structural domains, F(1) containing the extramembraneous catalytic core and F(0) containing the membrane proton channel, linked together by a central stalk and a peripheral stalk. During catalysis, ATP synthesis in the catalytic domain of F(1) is coupled via a rotary mechanism of the central stalk subunits to proton translocation. Functionally, key component of the F(0) channel; it plays a direct role in translocation across the membrane. A homomeric c-ring of between 10-14 subunits forms the central stalk rotor element with the F(1) delta and epsilon subunits. This Huperzia lucidula (Shining clubmoss) protein is ATP synthase subunit c, chloroplastic.